The following is a 232-amino-acid chain: Nuclear transcription factor Y subunit nfyc-1 (232 aa).

The segment at 191-232 (TVPTTSTNGPGHMSEDSFQDPNMHSDFHQRTSNSSVNRSHHN) is disordered. Positions 220 to 232 (RTSNSSVNRSHHN) are enriched in polar residues.

Belongs to the NFYC/HAP5 subunit family. As to quaternary structure, forms two NF-Y heterotrimeric transcription factor complexes: the nfya-1-NF-Y complex is composed of nfya-1, nfyb-1 and nfyc-1, and the nfya-2-NF-Y complex is composed of nfya-2, nfyb-1 and nfyc-1. Interacts with nfyb-1; the interaction is direct and is required for the interaction with either nfya-1 or nfya-2, and subsequent binding of the complex to the 5'-CCAAT-3' box motif in DNA. Expressed in certain parts of the gonads with high expression in fertilized oocytes in the uterus and mature oocytes from the distal to the proximal arm of the gonad, but weak expression in the syncytial ovaries and immature oocytes at the beginning of the proximal arm of the gonad. Expressed in the excretory cell, secretory cells in the pharyngeal terminal bulb wall, in the small ganglia surrounding the pharynx and in the neurons running anteriorly to the sensory organs in the head. Not expressed in the intestine, the hypodermis or body wall muscle surrounding the pseudocoelomic space.

Its subcellular location is the nucleus. It localises to the cytoplasm. The protein resides in the perikaryon. Its function is as follows. Component of sequence-specific heterotrimeric transcription factor (nfya-1-NF-Y and nfya-2-NF-Y) complexes which specifically recognize a 5'-CCAAT-3' box motif found in the promoters of its target genes to regulate their expression and control cellular identity in particular tissue types. In association with the components in the NF-Y complexes, represses the expression of the T-box transcription factor tbx-2 throughout larval development, which most likely restricts its expression to certain tissues. May act to repress txb-2 expression in conjunction with tbx-2 itself, which has an autoregulatory role. In association with the components in the nfya-1-NF-Y complex, negatively regulates the expression of the homeobox protein egl-5 to spatially restrict its expression in tissues such as the head. May regulate egl-5 expression in association with the mes-2-mes-3-mes-6 complex. The polypeptide is Nuclear transcription factor Y subunit nfyc-1 (Caenorhabditis elegans).